The primary structure comprises 145 residues: Large ribosomal subunit protein uL13 (145 aa).

It belongs to the universal ribosomal protein uL13 family. In terms of assembly, part of the 50S ribosomal subunit. Interacts weakly with proteins L3 and L6.

In terms of biological role, this protein is one of the early assembly proteins of the 50S ribosomal subunit. Binds to 23S rRNA. This chain is Large ribosomal subunit protein uL13, found in Haloarcula marismortui (strain ATCC 43049 / DSM 3752 / JCM 8966 / VKM B-1809) (Halobacterium marismortui).